The sequence spans 846 residues: MAP7 domain-containing protein 1 (846 aa).

Disordered regions lie at residues 1 to 153 (MESG…ERAK) and 186 to 210 (EQRL…EKNK). A compositionally biased stretch (pro residues) spans 24-41 (EPRPSPEGDPSPPPPPTP). Phosphothreonine is present on residues threonine 49 and threonine 53. Serine 95 bears the Phosphoserine mark. A Phosphothreonine modification is found at threonine 99. Low complexity predominate over residues 113-123 (RSSQPSPTTVP). A phosphoserine mark is found at serine 115 and serine 118. A Phosphothreonine modification is found at threonine 120. A phosphoserine mark is found at serine 125 and serine 127. A coiled-coil region spans residues 130 to 224 (AKQDVKKAGE…AAIQRSVKKT (95 aa)). A compositionally biased stretch (basic and acidic residues) spans 132-153 (QDVKKAGERHKLAKERREERAK). Serine 256, serine 275, serine 315, serine 368, and serine 401 each carry phosphoserine. The disordered stretch occupies residues 318–816 (TLPRNGRDQG…KGTAGDKSLG (499 aa)). The segment covering 407 to 437 (RRLEATPVQKKEKKDKERENEKEKSALARER) has biased composition (basic and acidic residues). A coiled-coil region spans residues 414–443 (VQKKEKKDKERENEKEKSALARERNLKKRQ). 4 positions are modified to phosphoserine: serine 444, serine 448, serine 454, and serine 460. Over residues 460 to 471 (SPKSKARPSSPS) the composition is skewed to low complexity. A Glycyl lysine isopeptide (Lys-Gly) (interchain with G-Cter in SUMO2) cross-link involves residue lysine 462. A phosphoserine mark is found at serine 479 and serine 496. Over residues 479 to 497 (SPCPSPGPGHALPPKPPSP) the composition is skewed to pro residues. Basic and acidic residues predominate over residues 523-539 (PEDKNHRKSRAAEEKEP). Positions 542–556 (PASPAPSPVPSPTPA) are enriched in pro residues. Phosphoserine is present on residues serine 544, serine 548, and serine 552. Residue threonine 554 is modified to Phosphothreonine. Positions 568 to 579 (PAETAVPAVPAA) are enriched in low complexity. Positions 599 to 740 (TTDREEATRL…AETKKQDAKE (142 aa)) form a coiled coil. The span at 600 to 740 (TDREEATRLL…AETKKQDAKE (141 aa)) shows a compositional bias: basic and acidic residues. Phosphothreonine is present on threonine 818.

This sequence belongs to the MAP7 family.

The protein resides in the cytoplasm. It is found in the cytoskeleton. It localises to the spindle. Its subcellular location is the microtubule organizing center. The protein localises to the centrosome. The protein resides in the midbody. Functionally, microtubule-stabilizing protein involved in the control of cell motility and neurite outgrowth. Facilitate microtubule stabilization through the maintenance of acetylated stable microtubules. In Mus musculus (Mouse), this protein is MAP7 domain-containing protein 1 (Map7d1).